A 176-amino-acid chain; its full sequence is Large ribosomal subunit protein uL16 (176 aa).

It belongs to the universal ribosomal protein uL16 family.

This chain is Large ribosomal subunit protein uL16, found in Picrophilus torridus (strain ATCC 700027 / DSM 9790 / JCM 10055 / NBRC 100828 / KAW 2/3).